The sequence spans 41 residues: Peroxidase 3 (41 aa).

The protein belongs to the peroxidase family. Classical plant (class III) peroxidase subfamily. Requires heme b as cofactor. Ca(2+) is required as a cofactor.

The protein resides in the secreted. It carries out the reaction 2 a phenolic donor + H2O2 = 2 a phenolic radical donor + 2 H2O. Removal of H(2)O(2), oxidation of toxic reductants, biosynthesis and degradation of lignin, suberization, auxin catabolism, response to environmental stresses such as wounding, pathogen attack and oxidative stress. These functions might be dependent on each isozyme/isoform in each plant tissue. The chain is Peroxidase 3 from Vitis vinifera (Grape).